We begin with the raw amino-acid sequence, 196 residues long: MSEKATEIANLLSPTVESLGLELLGVEYLPAPGGATLRLYIDVPLAEQPERVINVDDCERVSREVSAQLDVEDPISGNYTLEVSSPGVDRPLFTLEQFARHTGESAKIVLKLAQDGRRRFQGQILRIDAEAAAVVFAVDGKDVQIGYDNIDKARIVPDWVALGLAPQKPNKPGPKKPGHEKKKPSNESAAGKPRAE.

Residues 164 to 196 (LAPQKPNKPGPKKPGHEKKKPSNESAAGKPRAE) form a disordered region. The span at 173-182 (GPKKPGHEKK) shows a compositional bias: basic residues.

The protein belongs to the RimP family.

The protein resides in the cytoplasm. Functionally, required for maturation of 30S ribosomal subunits. This is Ribosome maturation factor RimP from Xanthomonas axonopodis pv. citri (strain 306).